A 445-amino-acid chain; its full sequence is FAS-associated factor 2-B (445 aa).

The UBA domain occupies 12 to 48 (DQTEKLLQFQDLTGIESIDQCRQTLQQHNWNIETAVQ). The stretch at 275–353 (SERLEREERN…ERKSECLPAE (79 aa)) forms a coiled coil. The disordered stretch occupies residues 302–355 (RADQEKERKKKEKQDQKRREEEEAQRKQMLEERKKRNLEEEKERKSECLPAEPV). A compositionally biased stretch (basic and acidic residues) spans 303–348 (ADQEKERKKKEKQDQKRREEEEAQRKQMLEERKKRNLEEEKERKSE). Positions 357–439 (DHPDNVKIIF…GLSQSQLLFV (83 aa)) constitute a UBX domain.

The protein resides in the cytoplasm. Its subcellular location is the lipid droplet. The protein localises to the endoplasmic reticulum. Functionally, plays an important role in endoplasmic reticulum-associated degradation (ERAD) that mediates ubiquitin-dependent degradation of misfolded endoplasmic reticulum proteins. Involved in inhibition of lipid droplet degradation. Involved in stress granule disassembly. This chain is FAS-associated factor 2-B (faf2-b), found in Xenopus laevis (African clawed frog).